The following is a 754-amino-acid chain: 1,4-alpha-glucan branching enzyme GlgB (754 aa).

Residue Asp-431 is the Nucleophile of the active site. Residue Glu-484 is the Proton donor of the active site.

It belongs to the glycosyl hydrolase 13 family. GlgB subfamily. In terms of assembly, monomer.

The enzyme catalyses Transfers a segment of a (1-&gt;4)-alpha-D-glucan chain to a primary hydroxy group in a similar glucan chain.. Its pathway is glycan biosynthesis; glycogen biosynthesis. Catalyzes the formation of the alpha-1,6-glucosidic linkages in glycogen by scission of a 1,4-alpha-linked oligosaccharide from growing alpha-1,4-glucan chains and the subsequent attachment of the oligosaccharide to the alpha-1,6 position. The chain is 1,4-alpha-glucan branching enzyme GlgB from Prochlorococcus marinus (strain MIT 9515).